Here is a 373-residue protein sequence, read N- to C-terminus: Forkhead box protein E1 (373 aa).

The interval 19-51 is disordered; sequence KEERGETAAGAGVPGEATGRGAGGRRRKRPLQR. Over residues 41 to 50 the composition is skewed to basic residues; the sequence is GGRRRKRPLQ. Residues 53 to 147 constitute a DNA-binding region (fork-head); the sequence is KPPYSYIALI…ESGSFLRRRK (95 aa).

Phosphorylated. As to expression, detected in adult brain, placenta, lung, liver, skeletal muscle, kidney, pancreas, heart, colon, small intestine testis and thymus. Expression was strongest in heart and pancreas.

The protein resides in the nucleus. Its function is as follows. Transcription factor that binds consensus sites on a variety of gene promoters and activate their transcription. Involved in proper palate formation, most probably through the expression of MSX1 and TGFB3 genes which are direct targets of this transcription factor. Also implicated in thyroid gland morphogenesis. May indirectly play a role in cell growth and migration through the regulation of WNT5A expression. The chain is Forkhead box protein E1 (FOXE1) from Homo sapiens (Human).